Here is a 287-residue protein sequence, read N- to C-terminus: Bifunctional protein FolD (287 aa).

NADP(+)-binding positions include 171-173 (GHS), Ile-196, and Ile-237.

It belongs to the tetrahydrofolate dehydrogenase/cyclohydrolase family. Homodimer.

The catalysed reaction is (6R)-5,10-methylene-5,6,7,8-tetrahydrofolate + NADP(+) = (6R)-5,10-methenyltetrahydrofolate + NADPH. The enzyme catalyses (6R)-5,10-methenyltetrahydrofolate + H2O = (6R)-10-formyltetrahydrofolate + H(+). The protein operates within one-carbon metabolism; tetrahydrofolate interconversion. In terms of biological role, catalyzes the oxidation of 5,10-methylenetetrahydrofolate to 5,10-methenyltetrahydrofolate and then the hydrolysis of 5,10-methenyltetrahydrofolate to 10-formyltetrahydrofolate. This is Bifunctional protein FolD from Methanosarcina mazei (strain ATCC BAA-159 / DSM 3647 / Goe1 / Go1 / JCM 11833 / OCM 88) (Methanosarcina frisia).